A 524-amino-acid chain; its full sequence is Translation initiation factor eIF2B subunit delta (524 aa).

Residues 1–155 (MAAVAVAVRE…EHTPADDPTL (155 aa)) form a disordered region. The residue at position 2 (alanine 2) is an N-acetylalanine. 2 stretches are compositionally biased toward basic and acidic residues: residues 8 to 20 (VREESRSEMKTEL) and 31 to 40 (LTQEEKLQLR). Serine 12 is modified (phosphoserine). Residues 41–51 (KEKKQQKKKRK) are compositionally biased toward basic residues. At threonine 86 the chain carries Phosphothreonine. Residues 96–121 (SKAELRAERRAKQEAERALKQARKGE) show a composition bias toward basic and acidic residues. The segment covering 130–140 (CPSTAGETTSG) has biased composition (polar residues). Residues 171–180 (RKDYGSKVSL) form a may bind the chemical integrated stress response (ISR) inhibitor ISRIB region.

Belongs to the eIF-2B alpha/beta/delta subunits family. In terms of assembly, component of the translation initiation factor 2B (eIF2B) complex which is a heterodecamer of two sets of five different subunits: alpha, beta, gamma, delta and epsilon. Subunits alpha, beta and delta comprise a regulatory subcomplex and subunits epsilon and gamma comprise a catalytic subcomplex. Within the complex, the hexameric regulatory complex resides at the center, with the two heterodimeric catalytic subcomplexes bound on opposite sides.

Its subcellular location is the cytoplasm. The protein resides in the cytosol. With respect to regulation, activated by the chemical integrated stress response (ISR) inhibitor ISRIB which stimulates guanine nucleotide exchange factor activity for both phosphorylated and unphosphorylated eIF2. Acts as a component of the translation initiation factor 2B (eIF2B) complex, which catalyzes the exchange of GDP for GTP on eukaryotic initiation factor 2 (eIF2) gamma subunit. Its guanine nucleotide exchange factor activity is repressed when bound to eIF2 complex phosphorylated on the alpha subunit, thereby limiting the amount of methionyl-initiator methionine tRNA available to the ribosome and consequently global translation is repressed. This chain is Translation initiation factor eIF2B subunit delta (Eif2b4), found in Mus musculus (Mouse).